Consider the following 192-residue polypeptide: Ion-translocating oxidoreductase complex subunit A (192 aa).

6 helical membrane-spanning segments follow: residues 5–25, 39–59, 63–83, 102–122, 134–154, and 171–191; these read ILLI…FLGL, IGMS…AYLI, ILTP…VIAV, LLGI…VALL, VIYG…FAAL, and SIAL…TGLV.

It belongs to the NqrDE/RnfAE family. As to quaternary structure, the complex is composed of six subunits: RnfA, RnfB, RnfC, RnfD, RnfE and RnfG.

It localises to the cell inner membrane. Part of a membrane-bound complex that couples electron transfer with translocation of ions across the membrane. The protein is Ion-translocating oxidoreductase complex subunit A of Pasteurella multocida (strain Pm70).